We begin with the raw amino-acid sequence, 326 residues long: Putative ABC transporter ATP-binding protein MA_4020 (326 aa).

Positions 1-12 (MTISTLSSSYGN) are enriched in polar residues. The tract at residues 1-34 (MTISTLSSSYGNAQDVPAEDSDRHGSIEPGSEKA) is disordered. In terms of domain architecture, ABC transporter spans 46–281 (LEVKNLCHRY…PELLRKAHLR (236 aa)). 80–87 (GANGAGKS) lines the ATP pocket.

Belongs to the ABC transporter superfamily.

The protein localises to the cell membrane. Its function is as follows. Probably part of an ABC transporter complex. Responsible for energy coupling to the transport system. The sequence is that of Putative ABC transporter ATP-binding protein MA_4020 from Methanosarcina acetivorans (strain ATCC 35395 / DSM 2834 / JCM 12185 / C2A).